Consider the following 132-residue polypeptide: Small ribosomal subunit protein uS8 (132 aa).

The protein belongs to the universal ribosomal protein uS8 family. In terms of assembly, part of the 30S ribosomal subunit. Contacts proteins S5 and S12.

In terms of biological role, one of the primary rRNA binding proteins, it binds directly to 16S rRNA central domain where it helps coordinate assembly of the platform of the 30S subunit. The chain is Small ribosomal subunit protein uS8 from Roseiflexus castenholzii (strain DSM 13941 / HLO8).